A 499-amino-acid chain; its full sequence is Maturase K (499 aa).

Belongs to the intron maturase 2 family. MatK subfamily.

It localises to the plastid. The protein localises to the chloroplast. Functionally, usually encoded in the trnK tRNA gene intron. Probably assists in splicing its own and other chloroplast group II introns. In Macrozamia communis (Burrawang palm), this protein is Maturase K.